The chain runs to 129 residues: Gas vesicle protein C (129 aa).

Repeats lie at residues 19–51, 52–84, and 85–117; these read VTQL…LHQF, HQNL…LHKF, and HQNL…LQQF. Positions 19-117 are 3 X 33 AA tandem repeats; the sequence is VTQLFRETHE…KAQSQYLQQF (99 aa).

The protein belongs to the gas vesicle GvpC family.

The protein localises to the gas vesicle. Its function is as follows. Confers stability, involved in shaping gas vesicles, hollow, gas filled proteinaceous nanostructures. During planktonic growth they allow positioning of the organism at a favorable depth for light or nutrient acquisition. In terms of biological role, cluster expression in E.coli (gvpA1-gvpA2-gvpC-gvpN-gvpJ-gvpK-gvpF-gvpG-gvpV-gvpW) allows cells to float and produces irregularly shaped gas vesicles. The sequence is that of Gas vesicle protein C from Nostoc sp. (strain PCC 7120 / SAG 25.82 / UTEX 2576).